Consider the following 458-residue polypeptide: uncharacterized protein (458 aa).

Positions 8–66 (PVEKNEFIDVVFEDLTHDGAGVAKVKGYPIFVKNGLPGEEAQIKIIKVKKNFAFGRLMK) constitute a TRAM domain. The [4Fe-4S] cluster site is built by cysteine 79, cysteine 85, cysteine 88, and cysteine 166. Glutamine 290, tyrosine 319, glutamate 340, and aspartate 388 together coordinate S-adenosyl-L-methionine. Cysteine 415 acts as the Nucleophile in catalysis.

It belongs to the class I-like SAM-binding methyltransferase superfamily. RNA M5U methyltransferase family.

This is an uncharacterized protein from Bacillus cereus (strain ATCC 14579 / DSM 31 / CCUG 7414 / JCM 2152 / NBRC 15305 / NCIMB 9373 / NCTC 2599 / NRRL B-3711).